Reading from the N-terminus, the 150-residue chain is Ribosome-binding factor A (150 aa).

Positions 119–150 (VAERAKSAQPAGEPDPYRFDGAAAADDDEPAT) are disordered.

This sequence belongs to the RbfA family. As to quaternary structure, monomer. Binds 30S ribosomal subunits, but not 50S ribosomal subunits or 70S ribosomes.

The protein localises to the cytoplasm. In terms of biological role, one of several proteins that assist in the late maturation steps of the functional core of the 30S ribosomal subunit. Associates with free 30S ribosomal subunits (but not with 30S subunits that are part of 70S ribosomes or polysomes). Required for efficient processing of 16S rRNA. May interact with the 5'-terminal helix region of 16S rRNA. This chain is Ribosome-binding factor A, found in Acidothermus cellulolyticus (strain ATCC 43068 / DSM 8971 / 11B).